A 325-amino-acid chain; its full sequence is MTTFNTISVIGAGAWGTALANACARAGRQVTLYGRSTDVLAAIAARGENPRLPGITLEKSIRVTHDLAESAKADALLLVTPTQSLREAMIALAPHVADATPLVICAKGIERGTRKFVTEIATEVLPQTRPAILSGPSFAADVARGLPTAVTLAAAEEPLAVALTHALGSSSLRPYHTTDVRGVEIGGAVKNVLAIAAGIAAGKALGASALAALTTRSFAELMRFGLACGAHRETIAGLSGLGDLILTCSSAQSRNFTFGMALGRGEAPPGSLSEGQSTAPVLIEIARAQAIEMPVAEAVANVLAGAITVNEGIEMLLARPFRAEG.

Trp15, Arg35, and Lys107 together coordinate NADPH. Residues Lys107, Gly135, and Ser137 each contribute to the sn-glycerol 3-phosphate site. Ala139 is an NADPH binding site. Sn-glycerol 3-phosphate-binding residues include Lys190, Asp243, Ser253, Arg254, and Asn255. Residue Lys190 is the Proton acceptor of the active site. Residue Arg254 participates in NADPH binding. NADPH-binding residues include Leu272 and Glu274.

It belongs to the NAD-dependent glycerol-3-phosphate dehydrogenase family.

The protein resides in the cytoplasm. The catalysed reaction is sn-glycerol 3-phosphate + NAD(+) = dihydroxyacetone phosphate + NADH + H(+). It carries out the reaction sn-glycerol 3-phosphate + NADP(+) = dihydroxyacetone phosphate + NADPH + H(+). The protein operates within membrane lipid metabolism; glycerophospholipid metabolism. Functionally, catalyzes the reduction of the glycolytic intermediate dihydroxyacetone phosphate (DHAP) to sn-glycerol 3-phosphate (G3P), the key precursor for phospholipid synthesis. This Afipia carboxidovorans (strain ATCC 49405 / DSM 1227 / KCTC 32145 / OM5) (Oligotropha carboxidovorans) protein is Glycerol-3-phosphate dehydrogenase [NAD(P)+].